Consider the following 504-residue polypeptide: Histidine ammonia-lyase (504 aa).

The 5-imidazolinone (Ala-Gly) cross-link spans 142–144 (ASG). 2,3-didehydroalanine (Ser) is present on serine 143.

Belongs to the PAL/histidase family. Post-translationally, contains an active site 4-methylidene-imidazol-5-one (MIO), which is formed autocatalytically by cyclization and dehydration of residues Ala-Ser-Gly.

It is found in the cytoplasm. The catalysed reaction is L-histidine = trans-urocanate + NH4(+). Its pathway is amino-acid degradation; L-histidine degradation into L-glutamate; N-formimidoyl-L-glutamate from L-histidine: step 1/3. In Staphylococcus aureus (strain MRSA252), this protein is Histidine ammonia-lyase.